The primary structure comprises 262 residues: MAELVCDALATLTRNTYGDNDESAKFCRMFRTMIRDSGLYGNIENWRAAFYRERLPKRMSHSTVSIQLDNLEREVLKIRAEGFCQGYTRKERTLNAFDLSDDGKGNTIIKPTTHLSSIILQNSYNSAFKLPKIPDGLLEKTRYELEEEKKNNDILKQKIKELENTISQLENYENEAKASQFVLEHLKFTNESLKIQRDEAQICLIGLCNKFGLQCEIDNSIHVTESDKKGKRKGRKNRRIEVSFGAPGHDLTEQISTLSDVE.

Positions 138 to 179 (LEKTRYELEEEKKNNDILKQKIKELENTISQLENYENEAKAS) form a coiled coil. The disordered stretch occupies residues 224–248 (TESDKKGKRKGRKNRRIEVSFGAPG). Residues 229 to 238 (KGKRKGRKNR) show a composition bias toward basic residues.

The protein belongs to the rotavirus NSP3 family.

It is found in the host cytoplasm. May play a role in stimulating the translation of viral mRNAs. The protein is Non-structural protein 3 of Rotavirus X (strain RVX/Human/China/NADRV-J19/1997/GXP[X]) (RV ADRV-N).